Here is a 546-residue protein sequence, read N- to C-terminus: MFS-type transporter GME11371 (546 aa).

A run of 7 helical transmembrane segments spans residues 39 to 59 (LTYLFLALILCMLLAVIDLTI), 77 to 96 (IGWYASVFFMTVASSQSSWG), 107 to 127 (MFLLAMGIFELGNVICGAAPT), 137 to 157 (ITGIGAAGVIAGCFTVAAFAV), 167 to 187 (GGLAATYGVGSSIGPIIGGVL), 195 to 215 (WCFYINLPIGGFAAIVLFLFF), and 240 to 260 (FPGFFCCIAAVTCLLLALLWG). N-linked (GlcNAc...) asparagine glycosylation is present at N267. Helical transmembrane passes span 270–290 (DVIGTLVGFFLFTALFAVVEW), 307–327 (VVLFGTIGGFFAGGAQFVLVY), 349–369 (LPYIIGSTITTIVAGTTISAT), 370–390 (GYFTPLIVGGGALWTVSAGLI), 402–422 (WIGYQALAGLAVGLCYQPPIL), 433–453 (VAATSAILLFFQTMGGAFMVS), and 509–529 (ISFAIIIALTGASTVAGIFMP).

This sequence belongs to the major facilitator superfamily.

It is found in the cell membrane. It functions in the pathway secondary metabolite biosynthesis. Its function is as follows. MFS-type transporter; part of the gene cluster that mediates the biosynthesis of dibenzodioxocinones such as pestalotiollide B, a novel class of inhibitors against cholesterol ester transfer protein (CEPT). essential for dibenzodioxocinones biosynthesis and may be involved in the secretion of the cluster products. In Pestalotiopsis microspora, this protein is MFS-type transporter GME11371.